The following is a 241-amino-acid chain: uncharacterized protein (241 aa).

7 helical membrane passes run isoleucine 12–leucine 32, leucine 39–phenylalanine 59, valine 89–threonine 109, tyrosine 117–valine 137, leucine 152–leucine 172, isoleucine 180–tyrosine 200, and tyrosine 215–isoleucine 235.

Belongs to the mimivirus L68/R809 family.

The protein resides in the membrane. This is an uncharacterized protein from Acanthamoeba polyphaga mimivirus (APMV).